Reading from the N-terminus, the 422-residue chain is Anhydromevalonate phosphate decarboxylase (422 aa).

N134 and E197 together coordinate Mn(2+). The Proton acceptor role is filled by D244.

This sequence belongs to the UbiD family. Requires prenylated FMN as cofactor. Mn(2+) serves as cofactor.

It carries out the reaction (2E)-3-methyl-5-phosphooxypent-2-enoate + H(+) = isopentenyl phosphate + CO2. It functions in the pathway isoprenoid biosynthesis; isopentenyl diphosphate biosynthesis via mevalonate pathway. Its function is as follows. Catalyzes the conversion of trans-anhydromevalonate 5-phosphate (tAHMP) into isopentenyl phosphate. Involved in the archaeal mevalonate (MVA) pathway, which provides fundamental precursors for isoprenoid biosynthesis, such as isopentenyl diphosphate (IPP) and dimethylallyl diphosphate (DMAPP). This chain is Anhydromevalonate phosphate decarboxylase, found in Methanosarcina mazei (strain ATCC BAA-159 / DSM 3647 / Goe1 / Go1 / JCM 11833 / OCM 88) (Methanosarcina frisia).